The following is a 1082-amino-acid chain: Error-prone DNA polymerase (1082 aa).

Belongs to the DNA polymerase type-C family. DnaE2 subfamily.

Its subcellular location is the cytoplasm. It carries out the reaction DNA(n) + a 2'-deoxyribonucleoside 5'-triphosphate = DNA(n+1) + diphosphate. In terms of biological role, DNA polymerase involved in damage-induced mutagenesis and translesion synthesis (TLS). It is not the major replicative DNA polymerase. The polypeptide is Error-prone DNA polymerase (Xanthomonas campestris pv. campestris (strain 8004)).